A 209-amino-acid chain; its full sequence is Immunoglobulin lambda-like polypeptide 1 (209 aa).

The signal sequence occupies residues 1-30; it reads MKLRVGQTLGTIPRQCEVLLLLLLLGLVDG. The j region stretch occupies residues 93-104; that stretch reads VFGGGTQLTILG. The segment at 105-209 is c region; that stretch reads QPKSDPLVTL…EKSVSPAECS (105 aa). The Ig-like C1-type domain occupies 110 to 204; sequence PLVTLFLPSL…EGNTVEKSVS (95 aa). Cys-131 and Cys-190 are disulfide-bonded.

In terms of assembly, interacts with VPREB1A. Interacts with SYNV1/HRD1 (via N-terminus); this interaction leads to increased IGLL1 ubiquitination and degradation in pre-B cells, possibly through a lysosomal, not proteasomal, pathway. As to expression, selectively expressed in pre-B lymphocytes.

It localises to the endoplasmic reticulum. The protein localises to the secreted. Critical for B-cell development. The chain is Immunoglobulin lambda-like polypeptide 1 (Igll1) from Mus musculus (Mouse).